Reading from the N-terminus, the 692-residue chain is Elongation factor G (692 aa).

A tr-type G domain is found at 8–282 (AKTRNIGIMA…AVIAYLPSPL (275 aa)). GTP contacts are provided by residues 17–24 (AHVDAGKT), 81–85 (DTPGH), and 135–138 (NKMD).

It belongs to the TRAFAC class translation factor GTPase superfamily. Classic translation factor GTPase family. EF-G/EF-2 subfamily.

The protein localises to the cytoplasm. Its function is as follows. Catalyzes the GTP-dependent ribosomal translocation step during translation elongation. During this step, the ribosome changes from the pre-translocational (PRE) to the post-translocational (POST) state as the newly formed A-site-bound peptidyl-tRNA and P-site-bound deacylated tRNA move to the P and E sites, respectively. Catalyzes the coordinated movement of the two tRNA molecules, the mRNA and conformational changes in the ribosome. The polypeptide is Elongation factor G (fus) (Streptococcus pyogenes serotype M1).